The chain runs to 246 residues: Flavin-dependent thymidylate synthase (246 aa).

The ThyX domain occupies 17–241; sequence ITVELVKSAA…PLTHAAFNAN (225 aa). FAD-binding positions include serine 69, 92–94, and glutamate 101; that span reads RHR. DUMP contacts are provided by residues 89–92, 101–105, and arginine 173; these read EFMR and EESGR. The ThyX motif signature appears at 92–103; sequence RHRVGWSYNEES. FAD is bound by residues 189 to 191 and histidine 195; that span reads NAR. Arginine 200 contacts dUMP. The active-site Involved in ionization of N3 of dUMP, leading to its activation is the arginine 200.

Belongs to the thymidylate synthase ThyX family. Homotetramer. FAD is required as a cofactor.

The enzyme catalyses dUMP + (6R)-5,10-methylene-5,6,7,8-tetrahydrofolate + NADPH + H(+) = dTMP + (6S)-5,6,7,8-tetrahydrofolate + NADP(+). The protein operates within pyrimidine metabolism; dTTP biosynthesis. In terms of biological role, catalyzes the reductive methylation of 2'-deoxyuridine-5'-monophosphate (dUMP) to 2'-deoxythymidine-5'-monophosphate (dTMP) while utilizing 5,10-methylenetetrahydrofolate (mTHF) as the methyl donor, and NADPH and FADH(2) as the reductant. The chain is Flavin-dependent thymidylate synthase from Streptomyces coelicolor (strain ATCC BAA-471 / A3(2) / M145).